A 694-amino-acid polypeptide reads, in one-letter code: uncharacterized protein (694 aa).

The Resolvase/invertase-type recombinase catalytic domain maps to 17–168 (DAFLYVRQSS…GGILNKARRG (152 aa)). Ser-25 functions as the O-(5'-phospho-DNA)-serine intermediate in the catalytic mechanism. Positions 175 to 316 (PIGLVYTPDA…QAALEQNATG (142 aa)) form a DNA-binding region, recombinase. A helical membrane pass occupies residues 386 to 406 (AVSALLLEVMAPAAIDVALAV).

It is found in the membrane. This is an uncharacterized protein from Sinorhizobium fredii (strain NBRC 101917 / NGR234).